Here is a 592-residue protein sequence, read N- to C-terminus: MEGKWLLCMLLVLGTAIVEAHDGHDDDVIDIEDDLDDVIEEVEDSKPDTTAPPSSPKVTYKAPVPTGEVYFADSFDRGTLSGWILSKAKKDDTDDEIAKYDGKWEVEEMKESKLPGDKGLVLMSRAKHHAISAKLNKPFLFDTKPLIVQYEVNFQNGIECGGAYVKLLSKTPELNLDQFHDKTPYTIMFGPDKCGEDYKLHFIFRHKNPKTGIYEEKHAKRPDADLKTYFTDKKTHLYTLILNPDNSFEILVDQSVVNSGNLLNDMTPPVNPSREIEDPEDRKPEDWDERPKIPDPEAVKPDDWDEDAPAKIPDEEATKPEGWLDDEPEYVPDPDAEKPEDWDEDMDGEWEAPQIANPRCESAPGCGVWQRPVIDNPNYKGKWKPPMIDNPSYQGIWKPRKIPNPDFFEDLEPFRMTPFSAIGLELWSMTSDIFFDNFIICADRRIVDDWANDGWGLKKAADGAAEPGVVGQMIEAAEERPWLWVVYILTVALPVFLVILFCCSGKKQTSGMEYKKTDAPQPDVKEEEEEKEEEKDKGDEEEEGEEKLEEKQKSDAEEDGGTVSQEEEDRKPKAEEDEILNRSPRNRKPRRE.

The first 20 residues, 1–20 (MEGKWLLCMLLVLGTAIVEA), serve as a signal peptide directing secretion. The Lumenal portion of the chain corresponds to 21–481 (HDGHDDDVID…QMIEAAEERP (461 aa)). Residues serine 74 and aspartate 117 each coordinate Ca(2+). An N6-acetyllysine modification is found at lysine 137. A disulfide bridge connects residues cysteine 160 and cysteine 194. Residues tyrosine 164, lysine 166, tyrosine 185, and aspartate 192 each contribute to the an alpha-D-glucoside site. Residues 260–345 (GNLLNDMTPP…AEKPEDWDED (86 aa)) form a disordered region. A compositionally biased stretch (basic and acidic residues) spans 274-319 (REIEDPEDRKPEDWDERPKIPDPEAVKPDDWDEDAPAKIPDEEATK). Residues 276–409 (IEDPEDRKPE…RKIPNPDFFE (134 aa)) are p domain (Extended arm). Tandem repeats lie at residues 278-290 (DPED…WDER), 295-307 (DPEA…WDED), 314-326 (DEEA…WLDD), 333-345 (DPDA…WDED), and 348-358 (GEWEAPQIANP). 2 4 X approximate repeats regions span residues 278–345 (DPED…WDED) and 348–405 (GEWE…IPNP). Positions 323 to 345 (WLDDEPEYVPDPDAEKPEDWDED) are enriched in acidic residues. The tract at residues 326–359 (DEPEYVPDPDAEKPEDWDEDMDGEWEAPQIANPR) is interaction with PPIB. Cysteine 360 and cysteine 366 form a disulfide bridge. Tandem repeats lie at residues 367 to 377 (GVWQRPVIDNP), 381 to 391 (GKWKPPMIDNP), and 395 to 405 (GIWKPRKIPNP). Glutamate 425 contacts an alpha-D-glucoside. Position 436 (aspartate 436) interacts with Ca(2+). The helical transmembrane segment at 482 to 502 (WLWVVYILTVALPVFLVILFC) threads the bilayer. S-palmitoyl cysteine attachment occurs at residues cysteine 502 and cysteine 503. The Cytoplasmic segment spans residues 503-592 (CSGKKQTSGM…SPRNRKPRRE (90 aa)). The sufficient to mediate interaction with SGIP1 stretch occupies residues 503-592 (CSGKKQTSGM…SPRNRKPRRE (90 aa)). The tract at residues 511–592 (GMEYKKTDAP…SPRNRKPRRE (82 aa)) is disordered. A compositionally biased stretch (acidic residues) spans 525–547 (KEEEEEKEEEKDKGDEEEEGEEK). The residue at position 554 (serine 554) is a Phosphoserine. Threonine 562 is modified (phosphothreonine). Position 564 is a phosphoserine; by MAPK3 (serine 564). Position 583 is a phosphoserine (serine 583).

The protein belongs to the calreticulin family. Interacts with MAPK3/ERK1. Interacts with KCNH2. Associates with ribosomes. Interacts with SGIP1; involved in negative regulation of endocytosis. The palmitoylated form interacts with the ribosome-translocon complex component SSR1, promoting efficient folding of glycoproteins. Interacts with SERPINA2P/SERPINA2 and with the S and Z variants of SERPINA1. Interacts with PPIB. Interacts with ZNRF4. Interacts with SMIM22. Interacts with TMX2. Interacts with TMEM35A/NACHO. Interacts with CHRNA7. Interacts with reticulophagy regulators RETREG2 and RETREG3. Interacts with DNM1L; may form part of a larger protein complex at the ER-mitochondrial interface during mitochondrial fission. Interacts with ADAM7. In terms of assembly, (Microbial infection) Interacts with HBV large envelope protein, isoform L. As to quaternary structure, (Microbial infection) Interacts with HBV large envelope protein, isoform M; this association may be essential for isoform M proper secretion. In terms of processing, phosphorylated at Ser-564 by MAPK3/ERK1. Phosphorylation by MAPK3/ERK1 increases its association with ribosomes. Post-translationally, palmitoylation by DHHC6 leads to the preferential localization to the perinuclear rough ER. It mediates the association of calnexin with the ribosome-translocon complex (RTC) which is required for efficient folding of glycosylated proteins. Ubiquitinated, leading to proteasomal degradation. Probably ubiquitinated by ZNRF4.

Its subcellular location is the endoplasmic reticulum membrane. It is found in the mitochondrion membrane. The protein localises to the melanosome membrane. Its function is as follows. Calcium-binding protein that interacts with newly synthesized monoglucosylated glycoproteins in the endoplasmic reticulum. It may act in assisting protein assembly and/or in the retention within the ER of unassembled protein subunits. It seems to play a major role in the quality control apparatus of the ER by the retention of incorrectly folded proteins. Associated with partial T-cell antigen receptor complexes that escape the ER of immature thymocytes, it may function as a signaling complex regulating thymocyte maturation. Additionally it may play a role in receptor-mediated endocytosis at the synapse. The polypeptide is Calnexin (CANX) (Homo sapiens (Human)).